Consider the following 221-residue polypeptide: MNKFSNTRIGFTCAVMAPRTLILTVGLLCMRIRSLLCSPAETTVTTAAVTSAHGPLCPLVFQGWAYAVYHQGDMALMTLDVYCCRQTSNNTVVAFSHHPADNTLLIEVGNNTRRHVDGISCQDHFRAQHQDCPAQTVHVRGVNESAFGLTHLQSCCLNEHSQLSERVAYHLKLRPATFGLETWAMYTVGILALGSFSSFYSQIARSLGVLPNDHHYALKKA.

The segment at Val-15–Leu-23 is HLA-E-binding epitope.

The protein belongs to the HHV-5 UL40 protein family.

Plays a role in the protection against host NK-cell cytotoxicity by up-regulating the cell surface expression of HLA-E independent of TAP (HLA-E has an inhibitory effect on the cytotoxic activity of the NK cell). Also promotes cell surface expression of UL18, another viral protein involved in NK-cell evasion. This Homo sapiens (Human) protein is Protein UL40 (UL40).